The primary structure comprises 219 residues: Ion-translocating oxidoreductase complex subunit G (219 aa).

A helical membrane pass occupies residues 25-45 (GLLLGLFSLVSALMLALASDA). T187 carries the FMN phosphoryl threonine modification.

Belongs to the RnfG family. In terms of assembly, the complex is composed of six subunits: RnfA, RnfB, RnfC, RnfD, RnfE and RnfG. Requires FMN as cofactor.

It localises to the cellular chromatophore membrane. Its function is as follows. Part of a membrane-bound complex that couples electron transfer with translocation of ions across the membrane. The protein is Ion-translocating oxidoreductase complex subunit G of Cereibacter sphaeroides (strain ATCC 17023 / DSM 158 / JCM 6121 / CCUG 31486 / LMG 2827 / NBRC 12203 / NCIMB 8253 / ATH 2.4.1.) (Rhodobacter sphaeroides).